The primary structure comprises 133 residues: Complexin-1 (133 aa).

2 disordered regions span residues 1–40 (MDFVMKQALGGATKDMGKMLGGDEEKDPDAEKKEEERLEA) and 85–112 (AMEAQAEGSLTRPKKAIPAGCGDEDEEE). Basic and acidic residues predominate over residues 15–40 (DMGKMLGGDEEKDPDAEKKEEERLEA). A coiled-coil region spans residues 28 to 60 (PDAEKKEEERLEALRQAEEERAGKYAKMEAERE).

The protein belongs to the complexin/synaphin family. In terms of assembly, binds to the SNARE core complex containing SNAP25, VAMP2 and syntaxin-1. In terms of tissue distribution, nervous system. Present in electric organ (at protein level).

It is found in the cytoplasm. It localises to the cytosol. Positively regulates a late step in synaptic vesicle exocytosis. The chain is Complexin-1 from Narke japonica (Japanese sleeper ray).